The primary structure comprises 72 residues: Conotoxin Gla(2)-TxVI/B (72 aa).

An N-terminal signal peptide occupies residues 1–19 (MEKLIILLLVAAVLMSTQA). Residues 20-44 (LFQEKRTMKKIDFLSKGKADAEKQR) constitute a propeptide that is removed on maturation. Cystine bridges form between cysteine 48–cysteine 62, cysteine 55–cysteine 66, and cysteine 61–cysteine 70. At glutamate 56 the chain carries 4-carboxyglutamate. Position 58 is a 4-hydroxyproline (proline 58). At serine 71 the chain carries Serine amide.

In terms of processing, brominated at one of the Trp residues. Expressed by the venom duct.

The protein resides in the secreted. This is Conotoxin Gla(2)-TxVI/B from Conus textile (Cloth-of-gold cone).